Consider the following 302-residue polypeptide: Protease HtpX homolog (302 aa).

A helical membrane pass occupies residues 27-47; the sequence is LLMAIGGIIGGTAGMLIALII. H141 is a Zn(2+) binding site. E142 is a catalytic residue. H145 is a Zn(2+) binding site. 2 helical membrane-spanning segments follow: residues 151–171 and 195–215; these read VLVATIAATIAGAIGFLANMA and IGAILMIIIVPIIATIVQLAI. Residue E220 coordinates Zn(2+).

The protein belongs to the peptidase M48B family. Zn(2+) serves as cofactor.

The protein localises to the cell inner membrane. The sequence is that of Protease HtpX homolog from Aquifex aeolicus (strain VF5).